Here is a 79-residue protein sequence, read N- to C-terminus: uncharacterized protein (79 aa).

Residues M1 to D37 are disordered.

This is an uncharacterized protein from Bacillus subtilis (strain 168).